The sequence spans 356 residues: Cyanide hydratase (356 aa).

Residues 15 to 290 form the CN hydrolase domain; it reads FKVAAVQAEP…EVVLYANISL (276 aa). The active-site Proton acceptor is Glu55. Residue Lys137 is part of the active site. The Nucleophile role is filled by Cys172. Positions 331 to 356 are disordered; the sequence is DEQAASKAQQAEIDNAGKGSIVPSKL.

Belongs to the carbon-nitrogen hydrolase superfamily. Nitrilase family.

The enzyme catalyses formamide = hydrogen cyanide + H2O. Its function is as follows. Catalyzes the hydration of cyanide to formamide. Degradation of cyanide may be important for plant pathogenic fungi in infection of cyanogenic plants. This chain is Cyanide hydratase, found in Armillaria gallica (Bulbous honey fungus).